A 522-amino-acid polypeptide reads, in one-letter code: Probable G-protein coupled receptor egl-47 (522 aa).

Transmembrane regions (helical) follow at residues 140–160, 184–204, 238–258, 276–296, 345–365, 398–418, and 472–492; these read IIKL…NSFL, ASMI…LSAI, FVFF…KVVE, FILV…YHLY, PLLL…LYFL, ICWA…ICST, and LERT…LLLF.

This sequence belongs to the G-protein coupled receptor family. As to expression, expressed in some neurons in the head, the HSN neurons and the PVQ interneurons of the tail.

It localises to the membrane. In terms of biological role, orphan receptor. Regulates egg-laying probably by activating guanine nucleotide-binding protein goa-1, in the hermaphrodite-specific neurons (HSNs). The chain is Probable G-protein coupled receptor egl-47 from Caenorhabditis elegans.